The sequence spans 153 residues: Interleukin-4 (153 aa).

Positions 1–24 are cleaved as a signal peptide; it reads MGLTSQLLPPLFFLLACAGNFVHG. Intrachain disulfides connect C27/C151, C48/C89, and C70/C123. N62 is a glycosylation site (N-linked (GlcNAc...) asparagine).

This sequence belongs to the IL-4/IL-13 family. In terms of assembly, interacts with IL4R. Interacts with IL13RA1.

Its subcellular location is the secreted. Its function is as follows. Cytokine secreted primarily by mast cells, T-cells, eosinophils, and basophils that plays a role in regulating antibody production, hematopoiesis and inflammation, and the development of effector T-cell responses. Induces the expression of class II MHC molecules on resting B-cells. Enhances both secretion and cell surface expression of IgE and IgG1. Also regulates the expression of the low affinity Fc receptor for IgE (CD23) on both lymphocytes and monocytes. Positively regulates IL31RA expression in macrophages. Stimulates autophagy in dendritic cells by interfering with mTORC1 signaling and through the induction of RUFY4. In addition, plays a critical role in higher functions of the normal brain, such as memory and learning. Upon binding to IL4, IL4R receptor dimerizes either with the common IL2R gamma chain/IL2RG to produce the type 1 signaling complex, located mainly on hematopoietic cells, or with the IL13RA1 to produce the type 2 complex, which is also expressed on nonhematopoietic cells. Engagement of both types of receptors initiates JAK3 and to a lower extend JAK1 phosphorylation leading to activation of the signal transducer and activator of transcription 6/STAT6. The protein is Interleukin-4 (IL4) of Homo sapiens (Human).